A 250-amino-acid polypeptide reads, in one-letter code: Tail assembly protein GT (250 aa).

This sequence belongs to the lambda-like tail assembly protein family. In terms of assembly, interacts (via C-terminus) with tail tube protein. Interacts (via N-terminus) with the tail assembly protein G and the tape measure protein.

The protein localises to the host cytoplasm. Its function is as follows. Promotes tail assembly by creating a scaffold for the tail tube proteins. Tail assembly proteins G and GT probably wrap the linear tape measure protein to create a tail assembly scaffold. This allows the polymerization of the tail tube protein, during which G and GT are released, therefore they are absent in the mature virion. The tail assembly protein GT is produced by a rare -1 ribosomal frameshift. The ratio of translated G/GT is about 20, and this ratio is important for proper tail assembly. The protein is Tail assembly protein GT of Escherichia coli (Bacteriophage N15).